A 181-amino-acid polypeptide reads, in one-letter code: Histone deacetylase complex subunit SAP30L (181 aa).

The Atypical zinc finger occupies 26–74 (CCLIDGGERCPRPAGNASFSKRVQKSISQKKLKLDIDKSVRHLYICDFH). The segment at 82-103 (RNKRKRKTSDDGGDSPEHETDV) is disordered. The short motif at 83 to 88 (NKRKRK) is the Nuclear localization signal (NLS) element. The tract at residues 85–87 (RKR) is important for DNA and phosphoinositide binding.

This sequence belongs to the SAP30 family. Interacts with components of the histone deacetylase complex sin3a, hdac1 and hdac2. Binds histones and nucleosomes.

It is found in the nucleus. The protein resides in the nucleolus. Its function is as follows. Functions as a transcription repressor, probably via its interaction with histone deacetylase complexes. Involved in the functional recruitment of the class 1 Sin3-histone deacetylase complex (HDAC) to the nucleolus. Binds DNA, apparently without sequence-specificity, and bends bound double-stranded DNA. Binds phosphoinositol phosphates (phosphoinositol 3-phosphate, phosphoinositol 4-phosphate and phosphoinositol 5-phosphate) via the same basic sequence motif that mediates DNA binding and nuclear import. In Xenopus tropicalis (Western clawed frog), this protein is Histone deacetylase complex subunit SAP30L (sap30l).